The chain runs to 298 residues: Small ribosomal subunit biogenesis GTPase RsgA 1 (298 aa).

Positions 63-224 constitute a CP-type G domain; sequence QTQLVRPPVA…VADTPGFSSY (162 aa). Residues 112–115 and 167–175 contribute to the GTP site; these read AKTD and GQTGAGKST. Positions 248, 253, 255, and 261 each coordinate Zn(2+).

The protein belongs to the TRAFAC class YlqF/YawG GTPase family. RsgA subfamily. In terms of assembly, monomer. Associates with 30S ribosomal subunit, binds 16S rRNA. It depends on Zn(2+) as a cofactor.

The protein localises to the cytoplasm. Its function is as follows. One of several proteins that assist in the late maturation steps of the functional core of the 30S ribosomal subunit. Helps release RbfA from mature subunits. May play a role in the assembly of ribosomal proteins into the subunit. Circularly permuted GTPase that catalyzes slow GTP hydrolysis, GTPase activity is stimulated by the 30S ribosomal subunit. The polypeptide is Small ribosomal subunit biogenesis GTPase RsgA 1 (Lactiplantibacillus plantarum (strain ATCC BAA-793 / NCIMB 8826 / WCFS1) (Lactobacillus plantarum)).